Reading from the N-terminus, the 3313-residue chain is PHD finger protein rhinoceros (3313 aa).

The segment covering 1 to 16 (MSQRGKRGNQHHHQSH) has biased composition (basic residues). Positions 1 to 136 (MSQRGKRGNQ…QGASTSSSWQ (136 aa)) are disordered. Low complexity-rich tracts occupy residues 42 to 71 (PPNG…ATGG) and 100 to 134 (LGAA…TSSS). The PHD-type 1 zinc finger occupies 323–373 (NVICDVCRSPDSEEANEMVFCDNCNICVHQACYGITAIPSGQWLCRTCSMG). The C2HC pre-PHD-type zinc-finger motif lies at 375–409 (TPDCVLCPNKAGAMKSNKSGKHWAHVSCALWIPEV). A PHD-type 2; degenerate zinc finger spans residues 433–487 (LVCVLCRKRVGSCIQCSKHSMSKGKKENAGGASGGGSASVTSSMHKANKYATGTG). Disordered stretches follow at residues 453–526 (MSKG…ARAQ), 708–1076 (LQSG…TKAA), 1107–1842 (KEAK…PPSH), 1961–2033 (AQKE…TMGN), 2104–2136 (PVTA…RMQR), 2145–2164 (ARRS…PPAT), 2219–2252 (AAPQ…FNGG), 2353–2374 (PAYP…PAHP), 2398–2514 (VAAK…PPPM), 2563–2587 (TTRG…LHPV), 2647–2679 (ATGT…QPPA), 2827–2871 (SCGL…SSSR), 2888–2954 (LAGA…IKIR), 2978–2998 (YEMT…YSTP), 3017–3077 (DFDK…SATT), 3144–3233 (KAEK…SLPE), and 3259–3313 (YENS…CEVR). Over residues 512–526 (KNDMTSEERNQARAQ) the composition is skewed to basic and acidic residues. A compositionally biased stretch (polar residues) spans 735-749 (KKLNNGAITSRTSSP). The segment covering 760–772 (STSTSTATATTAA) has biased composition (low complexity). The span at 792–802 (GAATGTSTHNK) shows a compositional bias: polar residues. Low complexity-rich tracts occupy residues 803–861 (TQSQ…ASGI) and 894–912 (EAAA…ATSS). A compositionally biased stretch (basic and acidic residues) spans 919–934 (QQRRRQEPERERDGRG). Residues 942-955 (TVPNRTQPTKSKQS) are compositionally biased toward polar residues. Residues 956–972 (TQADAGSGAGTGAAVET) are compositionally biased toward low complexity. The segment covering 994–1003 (ESLSSDESEE) has biased composition (acidic residues). The segment covering 1015–1025 (AALSSGLAASG) has biased composition (low complexity). Residues 1058–1072 (VESNVSDSQNQQTIR) are compositionally biased toward polar residues. Composition is skewed to basic and acidic residues over residues 1159–1168 (AADRMREPES) and 1178–1205 (KLKD…KEQS). Residues 1250-1266 (EAKSTAPAAKPTAAKTS) are compositionally biased toward low complexity. The span at 1285 to 1301 (LKSSKPLQDTTFSTANE) shows a compositional bias: polar residues. 3 stretches are compositionally biased toward low complexity: residues 1308-1324 (AATT…GVAT), 1377-1404 (SSSS…SGSD), and 1451-1464 (PAAS…AAAT). Over residues 1475–1485 (TARTRQNSTNK) the composition is skewed to polar residues. The span at 1551–1579 (SPEKQTARRKSRADESPKKIPNLEHEINQ) shows a compositional bias: basic and acidic residues. A compositionally biased stretch (acidic residues) spans 1638–1650 (PVVEPEVETEIEP). The segment covering 1667 to 1678 (TAPTHTQLSANA) has biased composition (polar residues). Residues 1691-1702 (PAAPLPASPTPT) show a composition bias toward pro residues. Residues 1722 to 1734 (SRWRSRRRRRRRS) are compositionally biased toward basic residues. Residues 1744-1773 (HTQHLLNEMEMARELEEERKNELLANASKY) adopt a coiled-coil conformation. Residues 1753 to 1765 (EMARELEEERKNE) show a composition bias toward basic and acidic residues. 2 stretches are compositionally biased toward polar residues: residues 1771 to 1781 (SKYSASTSSPA) and 1796 to 1805 (DSNSANSGGD). Over residues 1806–1819 (QQQQQQQQPLPQQL) the composition is skewed to low complexity. The span at 1823–1832 (SPSSEVASTI) shows a compositional bias: polar residues. The segment covering 1965 to 1984 (QQQQQQQQQQQQQQQQQQQQ) has biased composition (low complexity). Composition is skewed to polar residues over residues 1985–1999 (SCLY…SVAS) and 2007–2018 (MTANSGSYANSL). Residues 2019–2033 (TNTPNATPTNATMGN) are compositionally biased toward low complexity. Positions 2106–2118 (TAQSGAGSNSNKL) are enriched in polar residues. Composition is skewed to low complexity over residues 2148-2157 (SSSPSSVSES) and 2222-2242 (QQQT…QQQQ). Pro residues predominate over residues 2439–2451 (PVQPQPPTPPAPA). Residues 2479–2488 (GSGGSGAPGR) show a composition bias toward gly residues. A compositionally biased stretch (low complexity) spans 2658 to 2679 (PAVSAAPVAPAPAPAANSQPPA). Positions 2891–2900 (ASGGGAGTAS) are enriched in gly residues. Positions 2909–2924 (CSSGSNNDNNGKTGAA) are enriched in polar residues. Over residues 2935-2946 (KTLESSEDDHQT) the composition is skewed to basic and acidic residues. Basic and acidic residues predominate over residues 3017 to 3026 (DFDKGEENNK). The span at 3046–3065 (KRPKSSKPKKDKKEKKRQKQ) shows a compositional bias: basic residues. The segment covering 3179–3198 (TSPQGLLLNSFTPHSQNANA) has biased composition (polar residues). Over residues 3268–3290 (SASGTGSASSNSCNSNSNNNNNN) the composition is skewed to low complexity. The segment covering 3291–3302 (GSGGGAASGGGS) has biased composition (gly residues).

This sequence belongs to the JADE family.

It is found in the nucleus. Functionally, may function as a negative regulator of the EGFR/Ras/MAPK signaling pathway during eye development. The chain is PHD finger protein rhinoceros (rno) from Drosophila pseudoobscura pseudoobscura (Fruit fly).